The following is a 169-amino-acid chain: Large ribosomal subunit protein uL10 (169 aa).

Belongs to the universal ribosomal protein uL10 family. As to quaternary structure, part of the ribosomal stalk of the 50S ribosomal subunit. The N-terminus interacts with L11 and the large rRNA to form the base of the stalk. The C-terminus forms an elongated spine to which L12 dimers bind in a sequential fashion forming a multimeric L10(L12)X complex.

In terms of biological role, forms part of the ribosomal stalk, playing a central role in the interaction of the ribosome with GTP-bound translation factors. The sequence is that of Large ribosomal subunit protein uL10 from Staphylococcus saprophyticus subsp. saprophyticus (strain ATCC 15305 / DSM 20229 / NCIMB 8711 / NCTC 7292 / S-41).